We begin with the raw amino-acid sequence, 275 residues long: 3-methyl-2-oxobutanoate hydroxymethyltransferase (275 aa).

The Mg(2+) site is built by D49 and D88. 3-methyl-2-oxobutanoate contacts are provided by residues 49-50 (DS), D88, and K118. Residue E120 participates in Mg(2+) binding. The Proton acceptor role is filled by E187.

This sequence belongs to the PanB family. In terms of assembly, homodecamer; pentamer of dimers. Mg(2+) is required as a cofactor.

Its subcellular location is the cytoplasm. The enzyme catalyses 3-methyl-2-oxobutanoate + (6R)-5,10-methylene-5,6,7,8-tetrahydrofolate + H2O = 2-dehydropantoate + (6S)-5,6,7,8-tetrahydrofolate. It participates in cofactor biosynthesis; (R)-pantothenate biosynthesis; (R)-pantoate from 3-methyl-2-oxobutanoate: step 1/2. In terms of biological role, catalyzes the reversible reaction in which hydroxymethyl group from 5,10-methylenetetrahydrofolate is transferred onto alpha-ketoisovalerate to form ketopantoate. This is 3-methyl-2-oxobutanoate hydroxymethyltransferase from Brucella melitensis biotype 1 (strain ATCC 23456 / CCUG 17765 / NCTC 10094 / 16M).